The following is a 379-amino-acid chain: Protein RecA (379 aa).

Residues Met1–Glu24 are disordered. Residues Ser7 to Leu16 are compositionally biased toward polar residues. Gly84–Thr91 contributes to the ATP binding site.

The protein belongs to the RecA family.

Its subcellular location is the cytoplasm. Functionally, can catalyze the hydrolysis of ATP in the presence of single-stranded DNA, the ATP-dependent uptake of single-stranded DNA by duplex DNA, and the ATP-dependent hybridization of homologous single-stranded DNAs. It interacts with LexA causing its activation and leading to its autocatalytic cleavage. The protein is Protein RecA of Prochlorococcus marinus (strain MIT 9303).